The following is a 449-amino-acid chain: Trigger factor (449 aa).

The PPIase FKBP-type domain maps to 172-257 (GDEVRFDFKG…IKEITNVKPQ (86 aa)).

Belongs to the FKBP-type PPIase family. Tig subfamily.

It is found in the cytoplasm. It carries out the reaction [protein]-peptidylproline (omega=180) = [protein]-peptidylproline (omega=0). Functionally, involved in protein export. Acts as a chaperone by maintaining the newly synthesized protein in an open conformation. Functions as a peptidyl-prolyl cis-trans isomerase. The chain is Trigger factor from Ureaplasma parvum serovar 3 (strain ATCC 27815 / 27 / NCTC 11736).